The primary structure comprises 367 residues: Histidinol-phosphate aminotransferase (367 aa).

The residue at position 227 (Lys227) is an N6-(pyridoxal phosphate)lysine.

The protein belongs to the class-II pyridoxal-phosphate-dependent aminotransferase family. Histidinol-phosphate aminotransferase subfamily. In terms of assembly, homodimer. The cofactor is pyridoxal 5'-phosphate.

The catalysed reaction is L-histidinol phosphate + 2-oxoglutarate = 3-(imidazol-4-yl)-2-oxopropyl phosphate + L-glutamate. It functions in the pathway amino-acid biosynthesis; L-histidine biosynthesis; L-histidine from 5-phospho-alpha-D-ribose 1-diphosphate: step 7/9. The protein is Histidinol-phosphate aminotransferase of Leptospira borgpetersenii serovar Hardjo-bovis (strain JB197).